The following is a 58-amino-acid chain: Preprotein translocase subunit SecG (58 aa).

Residues 1–33 lie on the Cytoplasmic side of the membrane; the sequence is MARRRKYEGLNPFVAAGLIKFSEEGELEKIKLS. A helical membrane pass occupies residues 34-55; that stretch reads PKAAIAISLAIIAAILALNLLL. The Extracellular portion of the chain corresponds to 56–58; sequence PPP.

The protein belongs to the SEC61-beta family. Component of the protein translocase complex. Heterotrimer consisting of alpha (SecY), beta (SecG) and gamma (SecE) subunits. Can form oligomers of the heterotrimer.

The protein localises to the cell membrane. Involved in protein export. The function of the beta subunit is unknown, but it may be involved in stabilization of the trimeric complex. This is Preprotein translocase subunit SecG from Pyrobaculum calidifontis (strain DSM 21063 / JCM 11548 / VA1).